The chain runs to 151 residues: Transcriptional repressor NrdR (151 aa).

Residues 3 to 34 fold into a zinc finger; the sequence is CPFCSSDNTRVIDSRPADDNSSIRRRRLCDDC. In terms of domain architecture, ATP-cone spans 49-139; sequence LIVIKKDNNR…VYREFKDVNT (91 aa).

This sequence belongs to the NrdR family. Zn(2+) serves as cofactor.

In terms of biological role, negatively regulates transcription of bacterial ribonucleotide reductase nrd genes and operons by binding to NrdR-boxes. This Agathobacter rectalis (strain ATCC 33656 / DSM 3377 / JCM 17463 / KCTC 5835 / VPI 0990) (Eubacterium rectale) protein is Transcriptional repressor NrdR.